Here is a 677-residue protein sequence, read N- to C-terminus: Amine oxidase [copper-containing] alpha 2, peroxisomal (677 aa).

320–331 (YLDCGEFGCGQT) serves as a coordination point for substrate. D322 functions as the Proton acceptor in the catalytic mechanism. A disulfide bond links C341 and C367. Residue 407–412 (VGNYDY) participates in substrate binding. Y410 serves as the catalytic Schiff-base intermediate with substrate; via topaquinone. Y410 is modified (2',4',5'-topaquinone). H466 and H468 together coordinate Cu cation. D477, D617, and I618 together coordinate Mn(2+). H628 contributes to the Cu cation binding site.

This sequence belongs to the copper/topaquinone oxidase family. Homodimer. The cofactor is Cu cation. Requires Zn(2+) as cofactor. L-topaquinone is required as a cofactor. In terms of processing, topaquinone (TPQ) is generated by copper-dependent autoxidation of a specific tyrosyl residue. In terms of tissue distribution, expressed exclusively in leaves.

It is found in the peroxisome. The enzyme catalyses a primary methyl amine + O2 + H2O = an aldehyde + H2O2 + NH4(+). It functions in the pathway amine and polyamine degradation; putrescine degradation. Functionally, copper amine oxidase that can use putrescine and spermidine as substrates. Involved in putrescine catabolism in peroxisomes in response to salt stress. Regulates arginine-dependent nitric oxide (NO) production, a key signaling molecule regulating a wide range of physiological processes including responses to salt stress, by influencing arginine bioavailability. Modulates primary root growth. The polypeptide is Amine oxidase [copper-containing] alpha 2, peroxisomal (Arabidopsis thaliana (Mouse-ear cress)).